The sequence spans 412 residues: Multifunctional CCA protein (412 aa).

G8 and R11 together coordinate ATP. Residues G8 and R11 each coordinate CTP. 2 residues coordinate Mg(2+): E21 and D23. The ATP site is built by R91, R137, and R140. CTP contacts are provided by R91, R137, and R140. Residues 228 to 329 (TGIHTLMTLA…LKLFNAIDVW (102 aa)) form the HD domain.

Belongs to the tRNA nucleotidyltransferase/poly(A) polymerase family. Bacterial CCA-adding enzyme type 1 subfamily. In terms of assembly, monomer. Can also form homodimers and oligomers. The cofactor is Mg(2+). It depends on Ni(2+) as a cofactor.

The catalysed reaction is a tRNA precursor + 2 CTP + ATP = a tRNA with a 3' CCA end + 3 diphosphate. It catalyses the reaction a tRNA with a 3' CCA end + 2 CTP + ATP = a tRNA with a 3' CCACCA end + 3 diphosphate. Catalyzes the addition and repair of the essential 3'-terminal CCA sequence in tRNAs without using a nucleic acid template. Adds these three nucleotides in the order of C, C, and A to the tRNA nucleotide-73, using CTP and ATP as substrates and producing inorganic pyrophosphate. tRNA 3'-terminal CCA addition is required both for tRNA processing and repair. Also involved in tRNA surveillance by mediating tandem CCA addition to generate a CCACCA at the 3' terminus of unstable tRNAs. While stable tRNAs receive only 3'-terminal CCA, unstable tRNAs are marked with CCACCA and rapidly degraded. The chain is Multifunctional CCA protein from Yersinia pestis.